The primary structure comprises 397 residues: Phosphoglycerate kinase (397 aa).

Residues aspartate 23–asparagine 25, arginine 38, histidine 61–lysine 64, arginine 122, and arginine 155 contribute to the substrate site. Residues lysine 206, glycine 296, glutamate 327, and glycine 353 to serine 356 each bind ATP.

This sequence belongs to the phosphoglycerate kinase family. Monomer.

It is found in the cytoplasm. It carries out the reaction (2R)-3-phosphoglycerate + ATP = (2R)-3-phospho-glyceroyl phosphate + ADP. The protein operates within carbohydrate degradation; glycolysis; pyruvate from D-glyceraldehyde 3-phosphate: step 2/5. This is Phosphoglycerate kinase from Clostridium perfringens (strain ATCC 13124 / DSM 756 / JCM 1290 / NCIMB 6125 / NCTC 8237 / Type A).